The following is a 176-amino-acid chain: MDKKSKLINLLKEVGCIRFGEFILASGKKSNYYIDIKKATTNPEILKLVGEIIAEQIKDEDVKVAGVELGSVPIATAVSIIAQKPLLIVRKKPKDYGTKNKIEGELKEGDKVVIVEDVTTTGGSVLKAVKEIRENGGIVDKVFVVVDRLEGAKENLQKENVELIPLVTVKELQSTQ.

5-phospho-alpha-D-ribose 1-diphosphate is bound by residues arginine 90, lysine 91, lysine 94, and 116–124 (EDVTTTGGS). Residues threonine 120 and arginine 148 each coordinate orotate.

Belongs to the purine/pyrimidine phosphoribosyltransferase family. PyrE subfamily. As to quaternary structure, homodimer. Requires Mg(2+) as cofactor.

The catalysed reaction is orotidine 5'-phosphate + diphosphate = orotate + 5-phospho-alpha-D-ribose 1-diphosphate. It participates in pyrimidine metabolism; UMP biosynthesis via de novo pathway; UMP from orotate: step 1/2. Catalyzes the transfer of a ribosyl phosphate group from 5-phosphoribose 1-diphosphate to orotate, leading to the formation of orotidine monophosphate (OMP). The protein is Orotate phosphoribosyltransferase of Methanocaldococcus jannaschii (strain ATCC 43067 / DSM 2661 / JAL-1 / JCM 10045 / NBRC 100440) (Methanococcus jannaschii).